Consider the following 487-residue polypeptide: 3-octaprenyl-4-hydroxybenzoate carboxy-lyase (487 aa).

A Mn(2+)-binding site is contributed by N172. Prenylated FMN is bound by residues 175–177 (IYR), 189–191 (RWL), and 194–195 (RG). E238 lines the Mn(2+) pocket. Residue D287 is the Proton donor of the active site.

This sequence belongs to the UbiD family. In terms of assembly, homohexamer. Prenylated FMN is required as a cofactor. Mn(2+) serves as cofactor.

The protein resides in the cell membrane. It carries out the reaction a 4-hydroxy-3-(all-trans-polyprenyl)benzoate + H(+) = a 2-(all-trans-polyprenyl)phenol + CO2. It functions in the pathway cofactor biosynthesis; ubiquinone biosynthesis. Its function is as follows. Catalyzes the decarboxylation of 3-octaprenyl-4-hydroxy benzoate to 2-octaprenylphenol, an intermediate step in ubiquinone biosynthesis. The sequence is that of 3-octaprenyl-4-hydroxybenzoate carboxy-lyase from Dechloromonas aromatica (strain RCB).